We begin with the raw amino-acid sequence, 294 residues long: Cytidine deaminase (294 aa).

CMP/dCMP-type deaminase domains lie at 48-168 (DEDA…FGPK) and 186-294 (LTGD…VLLG). Substrate is bound at residue 89–91 (NME). Position 102 (His-102) interacts with Zn(2+). The active-site Proton donor is Glu-104. Zn(2+) contacts are provided by Cys-129 and Cys-132.

It belongs to the cytidine and deoxycytidylate deaminase family. As to quaternary structure, homodimer. The cofactor is Zn(2+).

It catalyses the reaction cytidine + H2O + H(+) = uridine + NH4(+). It carries out the reaction 2'-deoxycytidine + H2O + H(+) = 2'-deoxyuridine + NH4(+). This enzyme scavenges exogenous and endogenous cytidine and 2'-deoxycytidine for UMP synthesis. The chain is Cytidine deaminase from Salmonella agona (strain SL483).